An 86-amino-acid polypeptide reads, in one-letter code: UPF0386 protein RC1_1783 (86 aa).

Belongs to the UPF0386 family.

The sequence is that of UPF0386 protein RC1_1783 from Rhodospirillum centenum (strain ATCC 51521 / SW).